A 577-amino-acid polypeptide reads, in one-letter code: Monooxygenase PC-14 (577 aa).

Belongs to the FMO family. The cofactor is FAD.

It participates in secondary metabolite biosynthesis. Monooxygenase; part of the gene cluster that mediates the biosynthesis of the indole diterpenes penitrems. The geranylgeranyl diphosphate (GGPP) synthase penG catalyzes the first step in penitrem biosynthesis via conversion of farnesyl pyrophosphate and isopentyl pyrophosphate into geranylgeranyl pyrophosphate (GGPP). Condensation of indole-3-glycerol phosphate with GGPP by the prenyl transferase penC then forms 3-geranylgeranylindole (3-GGI). Epoxidation by the FAD-dependent monooxygenase penM leads to a epoxidized-GGI that is substrate of the terpene cyclase penB for cyclization to yield paspaline. Paspaline is subsequently converted to 13-desoxypaxilline by the cytochrome P450 monooxygenase penP, the latter being then converted to paxilline by the cytochrome P450 monooxygenase penQ. Paxilline is converted to beta-paxitriol via C-10 ketoreduction by the short-chain dehydrogenase PC-15 which can be monoprenylated at the C-20 by the indole diterpene prenyltransferase penD. A two-step elimination (acetylation and elimination) process performed by the O-acetyltransferase PC-16 and the P.simplicissimum ptmI-ortholog not yet identified in P.crustosum, leads to the production of the prenylated form of penijanthine. The FAD-linked oxidoreductase ptmO then converts the prenylated form of penijanthine into PC-M5 which is in turn transformed into PC-M4 by the aromatic dimethylallyltransferase PC-22. A series of oxidation steps involving 4 cytochrome P450 monooxygenases (PC-21, PC-05, PC-23, PC-20) and a FAD-dependent monooxygenase (PC-14) are required for the transformation of PC-M4 to penitrems A and E. Synthesis of these final products is proposed to proceed via penitrems D and C (PC-21, PC-05, PC-14) and penitrems B and F (PC-21, PC-05, PC-14, PC-23). The protein is Monooxygenase PC-14 of Penicillium crustosum (Blue mold fungus).